Consider the following 169-residue polypeptide: Probable chorismate pyruvate-lyase (169 aa).

Substrate-binding residues include Arg-71, Ile-110, and Glu-150.

This sequence belongs to the UbiC family.

The protein localises to the cytoplasm. It carries out the reaction chorismate = 4-hydroxybenzoate + pyruvate. It functions in the pathway cofactor biosynthesis; ubiquinone biosynthesis. Removes the pyruvyl group from chorismate, with concomitant aromatization of the ring, to provide 4-hydroxybenzoate (4HB) for the ubiquinone pathway. The protein is Probable chorismate pyruvate-lyase of Acinetobacter baumannii (strain ATCC 17978 / DSM 105126 / CIP 53.77 / LMG 1025 / NCDC KC755 / 5377).